The primary structure comprises 307 residues: N-acetylmuramic acid 6-phosphate etherase (307 aa).

Positions 62–225 (IVLAFQKGAR…TTASMIRIGK (164 aa)) constitute an SIS domain. Glu-90 functions as the Proton donor in the catalytic mechanism. The active site involves Glu-121.

This sequence belongs to the GCKR-like family. MurNAc-6-P etherase subfamily. Homodimer.

It carries out the reaction N-acetyl-D-muramate 6-phosphate + H2O = N-acetyl-D-glucosamine 6-phosphate + (R)-lactate. The protein operates within amino-sugar metabolism; 1,6-anhydro-N-acetylmuramate degradation. It functions in the pathway amino-sugar metabolism; N-acetylmuramate degradation. Its pathway is cell wall biogenesis; peptidoglycan recycling. Its function is as follows. Specifically catalyzes the cleavage of the D-lactyl ether substituent of MurNAc 6-phosphate, producing GlcNAc 6-phosphate and D-lactate. Together with AnmK, is also required for the utilization of anhydro-N-acetylmuramic acid (anhMurNAc) either imported from the medium or derived from its own cell wall murein, and thus plays a role in cell wall recycling. The sequence is that of N-acetylmuramic acid 6-phosphate etherase from Mesorhizobium japonicum (strain LMG 29417 / CECT 9101 / MAFF 303099) (Mesorhizobium loti (strain MAFF 303099)).